Here is a 1273-residue protein sequence, read N- to C-terminus: MVSMLPKADAATGVIRKSYAQLPEVVNVPNLIEMQLQSFVWFQEEGLRELIEEISPIKDFVGNRLELEFIGYEFREPRLSEYECTQRDQTYSVPLYVKARLIVKTTGEIKEPFDLFFGDIPLMTALGTFITSGTERVVVSQLLRSPGVYFTISDDPATGRPLCHTNLIPSRGAWLEFETSNRDVISVKIDGRRKIPVSTLLRAIGYSDDLDILNLFEVIDNDPERHYIQSSIDRDPLIKDEISALIDIYSRLRPGDPPNADNARKLINEMFFDPQHYDLGKVGRYKVNRRLELPSREVGENRALTREDIVAIIQRIIMVNNGQDTPDDIDHLGNRRIRTVGELVQNQFRIGLVRLERVARERMSIVNLEMVTPSALVNIRPVVSAVKEFFGGSQLSQFMDQTNPLAEITNKRRLSAMGPGGLSRERAGFDVRDVHYSHYGRICPIETPEGPNIGLIGSLATYSRINRYGFVETPYRKVYSKLKNNDKKLVGLKLKIEISEKGKVLAAAGSTISEDSFKLISKLPECDISVMPFVSAEVKYMPADEEDRYIIAQANTRLDEKGYFLDDRIEARSAERYVVEPPDKIDYMDVSPKQIFSVAASLIPFLEHDDANRALMGANMQRQAVPLLRAEAPMVATGMEREAARYSGQVIFAKHAGVASSVTSEKIIIRTAEGGHDEYLLKKFVRTNQGTCINQHAIINKGQKIAAGQVLADSSATENGELALGQNCVVAFMSWQGFNYEDAIILSERLVREDAFTSIHITKHELEARDTKLGVEEITRDIPNVGEESLRELDEDGIIRIGAEVGPDDILVGKITPKGETELSAEEKLLRAIFGEKAREVKDTSLRMPHGEWGKVINVRIFSRDSGDDLPARVNKWVQVWVAQKRKVSVGDKLAGRHGNKGVISIIAPVEDMPYLPDGTPVDVVLNPIGVPSRMNLGQILETHLGWAGHLLGFRVATPVFDGADDTVIEDALARSWLSAKAGAIDMSPENKRPSADAHKAIEWIKQQGFDGKKIFDEKHPGLAKEVSLKLWLKDMGVDASALSGAELEKKAYDVSSQSRLPSPIVGKSVLRDGRTGETFDQPVTVGNMYILKLIHLVEDKVHARATGPYSLISQQPLGGKAQFGGQRFGEMEVWAMYAYGTAHNLQEMLTIKSDDIAGRAKAYESIVKGEDVLQPGVPESFKVLVKELQSLGLAVEVINEEVKIAPSEKVSSLNEGNLPASDEISAEILPETLYANTEDISEDSMMSVIDADDQDLVVSSNDEEVSENDERS.

The segment at 1252–1273 is disordered; the sequence is ADDQDLVVSSNDEEVSENDERS.

The protein belongs to the RNA polymerase beta chain family. As to quaternary structure, the RNAP catalytic core consists of 2 alpha, 1 beta, 1 beta' and 1 omega subunit. When a sigma factor is associated with the core the holoenzyme is formed, which can initiate transcription.

The enzyme catalyses RNA(n) + a ribonucleoside 5'-triphosphate = RNA(n+1) + diphosphate. Its function is as follows. DNA-dependent RNA polymerase catalyzes the transcription of DNA into RNA using the four ribonucleoside triphosphates as substrates. The sequence is that of DNA-directed RNA polymerase subunit beta from Dehalococcoides mccartyi (strain CBDB1).